Here is a 313-residue protein sequence, read N- to C-terminus: UPF0761 membrane protein VV1_0885 (313 aa).

6 consecutive transmembrane segments (helical) span residues tyrosine 41–leucine 61, methionine 104–aspartate 124, alanine 139–alanine 159, leucine 185–valine 205, alanine 215–alanine 235, and alanine 249–isoleucine 269. Residues proline 294–serine 313 form a disordered region. The span at glutamate 299 to serine 313 shows a compositional bias: basic and acidic residues.

This sequence belongs to the UPF0761 family.

The protein localises to the cell inner membrane. The sequence is that of UPF0761 membrane protein VV1_0885 from Vibrio vulnificus (strain CMCP6).